A 457-amino-acid chain; its full sequence is MDHLPIFCQLRDRDCLIVGGGDVAERKARLLLDAGARLTVNALAFIPQFTAWADAGMLTLVEGPFDESLLDTCWLAIAATDDDALNQRVSEAAESRRIFCNVVDAPKAASFIMPSIIDRSPLMVAVSSGGTSPVLARLLREKLESLLPLHLGQVAKYAGQLRGRVKQQFATMGERRRFWEKLFVNDRLAQSLANNDQKAITETTEQLINEPLDHRGEVVLVGAGPGDAGLLTLKGLQQIQQADVVVYDRLVSDDIMNLVRRDADRVFVGKRAGYHCVPQEEINQILLREAQKGKRVVRLKGGDPFIFGRGGEELETLCNADIPFSVVPGITAASGCSAYSGIPLTHRDYAQSVRLITGHLKTGGELDWENLAAEKQTLVFYMGLNQASTIQQKLIEHGMPGEMPVAIVENGTAVTQRVIDGTLTQLGELAQQMNSPSLIIIGRVVGLRDKLNWFSNH.

A precorrin-2 dehydrogenase /sirohydrochlorin ferrochelatase region spans residues 1-204; it reads MDHLPIFCQL…NDQKAITETT (204 aa). NAD(+)-binding positions include 22–23 and 43–44; these read DV and LA. Position 128 is a phosphoserine (S128). Residues 216 to 457 are uroporphyrinogen-III C-methyltransferase; the sequence is GEVVLVGAGP…RDKLNWFSNH (242 aa). S-adenosyl-L-methionine is bound at residue P225. The Proton acceptor role is filled by D248. K270 acts as the Proton donor in catalysis. Residues 301-303, I306, 331-332, M382, and G411 each bind S-adenosyl-L-methionine; these read GGD and TA.

It in the N-terminal section; belongs to the precorrin-2 dehydrogenase / sirohydrochlorin ferrochelatase family. This sequence in the C-terminal section; belongs to the precorrin methyltransferase family.

The enzyme catalyses uroporphyrinogen III + 2 S-adenosyl-L-methionine = precorrin-2 + 2 S-adenosyl-L-homocysteine + H(+). It catalyses the reaction precorrin-2 + NAD(+) = sirohydrochlorin + NADH + 2 H(+). The catalysed reaction is siroheme + 2 H(+) = sirohydrochlorin + Fe(2+). It functions in the pathway cofactor biosynthesis; adenosylcobalamin biosynthesis; precorrin-2 from uroporphyrinogen III: step 1/1. The protein operates within cofactor biosynthesis; adenosylcobalamin biosynthesis; sirohydrochlorin from precorrin-2: step 1/1. It participates in porphyrin-containing compound metabolism; siroheme biosynthesis; precorrin-2 from uroporphyrinogen III: step 1/1. Its pathway is porphyrin-containing compound metabolism; siroheme biosynthesis; siroheme from sirohydrochlorin: step 1/1. It functions in the pathway porphyrin-containing compound metabolism; siroheme biosynthesis; sirohydrochlorin from precorrin-2: step 1/1. Multifunctional enzyme that catalyzes the SAM-dependent methylations of uroporphyrinogen III at position C-2 and C-7 to form precorrin-2 via precorrin-1. Then it catalyzes the NAD-dependent ring dehydrogenation of precorrin-2 to yield sirohydrochlorin. Finally, it catalyzes the ferrochelation of sirohydrochlorin to yield siroheme. This Escherichia fergusonii (strain ATCC 35469 / DSM 13698 / CCUG 18766 / IAM 14443 / JCM 21226 / LMG 7866 / NBRC 102419 / NCTC 12128 / CDC 0568-73) protein is Siroheme synthase.